The primary structure comprises 183 residues: Nucleoside triphosphate pyrophosphatase (183 aa).

The Proton acceptor role is filled by Asp71.

This sequence belongs to the Maf family. A divalent metal cation is required as a cofactor.

The protein resides in the cytoplasm. It carries out the reaction a ribonucleoside 5'-triphosphate + H2O = a ribonucleoside 5'-phosphate + diphosphate + H(+). The catalysed reaction is a 2'-deoxyribonucleoside 5'-triphosphate + H2O = a 2'-deoxyribonucleoside 5'-phosphate + diphosphate + H(+). Nucleoside triphosphate pyrophosphatase. May have a dual role in cell division arrest and in preventing the incorporation of modified nucleotides into cellular nucleic acids. The polypeptide is Nucleoside triphosphate pyrophosphatase (Campylobacter jejuni subsp. doylei (strain ATCC BAA-1458 / RM4099 / 269.97)).